The primary structure comprises 1407 residues: MKDLLKFLKAQTKTEEFDAIKIALASPDMIRSWSFGEVKKPETINYRTFKPERDGLFCARIFGPVKDYECLCGKYKRLKHRGVICEKCGVEVTQTKVRRERMGHIELASPTAHIWFLKSLPSRIGLLLDMPLRDIERVLYFESYVVIEGGMTNLERQQILTEEQYLDALEEFGDEFDAKMGAEAIQALLKSMDLEQECEQLREELNETNSETKRKKLTKRIKLLEAFVQSGNKPEWMILTVLPVLPPDLRPLVPLDGGRFATSDLNDLYRRVINRNNRLKRLLDLAAPDIIVRNEKRMLQEAVDALLDNGRRGRAITGSNKRPLKSLADMIKGKQGRFRQNLLGKRVDYSGRSVITVGPYLRLHQCGLPKKMALELFKPFIYGKLELRGLATTIKAAKKMVEREEAVVWDILDEVIREHPVLLNRAPTLHRLGIQAFEPVLIEGKAIQLHPLVCAAYNADFDGDQMAVHVPLTLEAQLEARALMMSTNNILSPANGEPIIVPSQDVVLGLYYMTRDCVNAKGEGMVLTGPKEAERLYRSGLASLHARVKVRITEYEKDANGELVAKTSLKDTTVGRAILWMIVPKGLPYTIVNQALGKKAISKMLNTCYRILGLKPTVIFADQIMYTGFAYAARSGASVGIDDMVIPEKKHEIISEAEAEVAEIQEQFQSGLVTAGERYNKVIDIWAAANDRVSKAMMDNLQTETVINRDGQEEKQVSFNSIYMMADSGARGSAAQIRQLAGMRGLMAKPDGSIIETPITANFREGLNVLQYFISTHGARKGLADTALKTANSGYLTRRLVDVAQDLVVTEDDCGTHEGIMMTPVIEGGDVKEPLRDRVLGRVTAEDVLKPGTADILVPRNTLLHEQWCDLLEENSVDAVKVRSVVSCDTDFGVCAHCYGRDLARGHIINKGEAIGVIAAQSIGEPGTQLTMRTFHIGGAASRAAAESSIQVKNKGSIKLSNVKSVVNSSGKLVITSRNTELKLIDEFGRTKESYKVPYGAVLAKGDGEQVAGGETVANWDPHTMPVITEVSGFVRFTDMIDGQTITRQTDELTGLSSLVVLDSAERTAGGKDLRPALKIVDAQGNDVLIPGTDMPAQYFLPGKAIVQLEDGVQISSGDTLARIPQESGGTKDITGGLPRVADLFEARRPKEPAILAEISGIVSFGKETKGKRRLVITPVDGSDPYEEMIPKWRQLNVFEGERVERGDVISDGPEAPHDILRLRGVHAVTRYIVNEVQDVYRLQGVKINDKHIEVIVRQMLRKATIVNAGSSDFLEGEQVEYSRVKIANRELEANGKVGATYSRDLLGITKASLATESFISAASFQETTRVLTEAAVAGKRDELRGLKENVIVGRLIPAGTGYAYHQDRMRRRAAGEAPAAPQVTAEDASASLAELLNAGLGGSDNE.

Residues cysteine 70, cysteine 72, cysteine 85, and cysteine 88 each coordinate Zn(2+). Positions 460, 462, and 464 each coordinate Mg(2+). 4 residues coordinate Zn(2+): cysteine 814, cysteine 888, cysteine 895, and cysteine 898. Position 972 is an N6-acetyllysine (lysine 972).

This sequence belongs to the RNA polymerase beta' chain family. As to quaternary structure, the RNAP catalytic core consists of 2 alpha, 1 beta, 1 beta' and 1 omega subunit. When a sigma factor is associated with the core the holoenzyme is formed, which can initiate transcription. Mg(2+) is required as a cofactor. It depends on Zn(2+) as a cofactor.

The catalysed reaction is RNA(n) + a ribonucleoside 5'-triphosphate = RNA(n+1) + diphosphate. In terms of biological role, DNA-dependent RNA polymerase catalyzes the transcription of DNA into RNA using the four ribonucleoside triphosphates as substrates. The protein is DNA-directed RNA polymerase subunit beta' of Escherichia coli O1:K1 / APEC.